A 485-amino-acid polypeptide reads, in one-letter code: ATP synthase subunit beta (485 aa).

Basic and acidic residues predominate over residues 1–11 (MPATETADKNT). A disordered region spans residues 1–20 (MPATETADKNTKSANSDTSG). 170 to 177 (GGAGVGKT) contributes to the ATP binding site.

The protein belongs to the ATPase alpha/beta chains family. As to quaternary structure, F-type ATPases have 2 components, CF(1) - the catalytic core - and CF(0) - the membrane proton channel. CF(1) has five subunits: alpha(3), beta(3), gamma(1), delta(1), epsilon(1). CF(0) has three main subunits: a(1), b(2) and c(9-12). The alpha and beta chains form an alternating ring which encloses part of the gamma chain. CF(1) is attached to CF(0) by a central stalk formed by the gamma and epsilon chains, while a peripheral stalk is formed by the delta and b chains.

The protein resides in the cell membrane. The catalysed reaction is ATP + H2O + 4 H(+)(in) = ADP + phosphate + 5 H(+)(out). Its function is as follows. Produces ATP from ADP in the presence of a proton gradient across the membrane. The catalytic sites are hosted primarily by the beta subunits. The protein is ATP synthase subunit beta of Mycolicibacterium paratuberculosis (strain ATCC BAA-968 / K-10) (Mycobacterium paratuberculosis).